We begin with the raw amino-acid sequence, 350 residues long: tRNA uridine(34) hydroxylase (350 aa).

The Rhodanese domain occupies 146–240 (DDPDAVFIDM…YARRAREQGL (95 aa)). Residue Cys-200 is the Cysteine persulfide intermediate of the active site. Basic and acidic residues predominate over residues 319–328 (RRRRAGRENG). Residues 319 to 350 (RRRRAGRENGNKIFNKSRGRLNSKLSIPDPAE) are disordered.

The protein belongs to the TrhO family.

The catalysed reaction is uridine(34) in tRNA + AH2 + O2 = 5-hydroxyuridine(34) in tRNA + A + H2O. Functionally, catalyzes oxygen-dependent 5-hydroxyuridine (ho5U) modification at position 34 in tRNAs. In Salmonella gallinarum (strain 287/91 / NCTC 13346), this protein is tRNA uridine(34) hydroxylase.